The following is a 242-amino-acid chain: uncharacterized protein (242 aa).

This sequence to E.coli MazG and to plasmid pIP1100 erythromycin esterase.

This is an uncharacterized protein from Streptomyces cacaoi.